A 148-amino-acid chain; its full sequence is Lysozyme C (148 aa).

The signal sequence occupies residues 1–18 (MKALLLLGLLLLSVTVQG). The 130-residue stretch at 19-148 (KIFERCDLAR…VSQYVRNCGV (130 aa)) folds into the C-type lysozyme domain. Disulfide bonds link Cys-24/Cys-146, Cys-48/Cys-134, Cys-83/Cys-99, and Cys-95/Cys-113. Catalysis depends on residues Glu-53 and Asp-71.

The protein belongs to the glycosyl hydrolase 22 family. In terms of assembly, monomer.

The catalysed reaction is Hydrolysis of (1-&gt;4)-beta-linkages between N-acetylmuramic acid and N-acetyl-D-glucosamine residues in a peptidoglycan and between N-acetyl-D-glucosamine residues in chitodextrins.. Its function is as follows. Lysozymes have primarily a bacteriolytic function; those in tissues and body fluids are associated with the monocyte-macrophage system and enhance the activity of immunoagents. The protein is Lysozyme C (LYZ) of Halichoerus grypus (Gray seal).